We begin with the raw amino-acid sequence, 108 residues long: uncharacterized protein (108 aa).

A helical transmembrane segment spans residues leucine 10 to phenylalanine 32.

It is found in the membrane. This is an uncharacterized protein from Saccharomyces cerevisiae (strain ATCC 204508 / S288c) (Baker's yeast).